The following is a 244-amino-acid chain: Kallikrein-6 (244 aa).

An N-terminal signal peptide occupies residues Met1 to Ala16. The propeptide at Glu17–Lys21 is activation peptide. Positions Leu22–Gln242 constitute a Peptidase S1 domain. 6 disulfide bridges follow: Cys28–Cys157, Cys47–Cys63, Cys131–Cys231, Cys138–Cys203, Cys168–Cys182, and Cys193–Cys218. Residues His62 and Asp106 each act as charge relay system in the active site. An N-linked (GlcNAc...) asparagine glycan is attached at Asn134. Ser197 acts as the Charge relay system in catalysis.

Inactivated by autolytic cleavage after Arg-80. In fluids, highest levels found in milk of lactating women followed by cerebrospinal fluid, nipple aspirate fluid and breast cyst fluid. Also found in serum, seminal plasma and some amniotic fluids and breast tumor cytosolic extracts. Not detected in urine. At the tissue level, highest concentrations found in glandular tissues such as salivary glands followed by lung, colon, fallopian tube, placenta, breast, pituitary and kidney. Not detected in skin, spleen, bone, thyroid, heart, ureter, liver, muscle, endometrium, testis, pancreas, seminal vesicle, ovary, adrenals and prostate. In brain, detected in gray matter neurons (at protein level). Colocalizes with pathological inclusions such as Lewy bodies and glial cytoplasmic inclusions. Overexpressed in primary breast tumors but not expressed in metastatic tumors.

It localises to the secreted. It is found in the nucleus. The protein localises to the nucleolus. The protein resides in the cytoplasm. Its subcellular location is the mitochondrion. It localises to the microsome. Its activity is regulated as follows. Inhibited by a range of serine protease inhibitors including soybean trypsin inhibitor, benzamidine and serpins. Activated by a range of glycosaminoglycans including chondroitin sulfate, dermatan sulfate, heparan sulfate and heparin. In terms of biological role, serine protease which exhibits a preference for Arg over Lys in the substrate P1 position and for Ser or Pro in the P2 position. Shows activity against amyloid precursor protein, myelin basic protein, gelatin, casein and extracellular matrix proteins such as fibronectin, laminin, vitronectin and collagen. Degrades alpha-synuclein and prevents its polymerization, indicating that it may be involved in the pathogenesis of Parkinson disease and other synucleinopathies. May be involved in regulation of axon outgrowth following spinal cord injury. Tumor cells treated with a neutralizing KLK6 antibody migrate less than control cells, suggesting a role in invasion and metastasis. This Homo sapiens (Human) protein is Kallikrein-6 (KLK6).